The chain runs to 85 residues: Arminin 524 (85 aa).

The N-terminal stretch at 1–18 (MKAVFAILFLAFIALTYA) is a signal peptide. A propeptide spanning residues 19–57 (KSYDEVKEEIKNEVEREIFEDLEEESDELDNDVEEFNDA) is cleaved from the precursor. At Ala82 the chain carries Alanine amide.

Belongs to the arminin family. Expressed in entodermal epithelium along the body column.

It is found in the secreted. Its subcellular location is the target cell membrane. In terms of biological role, antimicrobial peptide with a broad-spectrum antimicrobial activity. Keeps its antibacterial activity under a wide range of salt concentrations that mimic physiological conditions of human blood, which is surprising, since Hydra is an obligate freshwater animal with nearly no salt tolerance. Does not affect red blood cells. The protein is Arminin 524 of Hydra oligactis (Brown hydra).